Consider the following 360-residue polypeptide: 3-isopropylmalate dehydrogenase (360 aa).

Residue 76–89 (GPKWDKIERDIRPE) coordinates NAD(+). The substrate site is built by Arg-96, Arg-106, Arg-134, and Asp-224. Residues Asp-224, Asp-248, and Asp-252 each contribute to the Mg(2+) site. 282–294 (GSAPDIAGLGIAN) provides a ligand contact to NAD(+).

This sequence belongs to the isocitrate and isopropylmalate dehydrogenases family. LeuB type 1 subfamily. In terms of assembly, homodimer. Requires Mg(2+) as cofactor. Mn(2+) serves as cofactor.

It is found in the cytoplasm. The catalysed reaction is (2R,3S)-3-isopropylmalate + NAD(+) = 4-methyl-2-oxopentanoate + CO2 + NADH. The protein operates within amino-acid biosynthesis; L-leucine biosynthesis; L-leucine from 3-methyl-2-oxobutanoate: step 3/4. Catalyzes the oxidation of 3-carboxy-2-hydroxy-4-methylpentanoate (3-isopropylmalate) to 3-carboxy-4-methyl-2-oxopentanoate. The product decarboxylates to 4-methyl-2 oxopentanoate. In Pseudomonas putida (strain ATCC 47054 / DSM 6125 / CFBP 8728 / NCIMB 11950 / KT2440), this protein is 3-isopropylmalate dehydrogenase.